A 143-amino-acid chain; its full sequence is MRVYVLNGPNLGRLGTRQPEVYGTTTYADLVELCQQTGRELGLEVVIRQTDAEQELLGWLHEAADLGACVVLNPAAWSHYSIAVRDACALLRAPLVEVHLSNIHAREEFRHHSVVSAVATGVICGLGVDGYRLALHHLAARAR.

The active-site Proton acceptor is the tyrosine 22. Substrate-binding residues include asparagine 73, histidine 79, and aspartate 86. The Proton donor role is filled by histidine 99. Substrate contacts are provided by residues 100–101 (LS) and arginine 110.

Belongs to the type-II 3-dehydroquinase family. Homododecamer.

The catalysed reaction is 3-dehydroquinate = 3-dehydroshikimate + H2O. Its pathway is metabolic intermediate biosynthesis; chorismate biosynthesis; chorismate from D-erythrose 4-phosphate and phosphoenolpyruvate: step 3/7. Catalyzes a trans-dehydration via an enolate intermediate. The chain is 3-dehydroquinate dehydratase from Salinispora tropica (strain ATCC BAA-916 / DSM 44818 / JCM 13857 / NBRC 105044 / CNB-440).